The primary structure comprises 285 residues: Polyamine aminopropyltransferase (285 aa).

The region spanning 5–241 is the PABS domain; the sequence is DNWYIEHFQP…GWWSVTMASK (237 aa). Residue Gln-35 participates in S-methyl-5'-thioadenosine binding. 2 residues coordinate spermidine: His-66 and Asp-90. S-methyl-5'-thioadenosine is bound by residues Asp-110 and 141 to 142; that span reads DG. Asp-160 acts as the Proton acceptor in catalysis. 160 to 163 is a spermidine binding site; that stretch reads DSTD. Pro-167 contacts S-methyl-5'-thioadenosine.

This sequence belongs to the spermidine/spermine synthase family. In terms of assembly, homodimer or homotetramer.

It is found in the cytoplasm. The catalysed reaction is S-adenosyl 3-(methylsulfanyl)propylamine + putrescine = S-methyl-5'-thioadenosine + spermidine + H(+). It functions in the pathway amine and polyamine biosynthesis; spermidine biosynthesis; spermidine from putrescine: step 1/1. In terms of biological role, catalyzes the irreversible transfer of a propylamine group from the amino donor S-adenosylmethioninamine (decarboxy-AdoMet) to putrescine (1,4-diaminobutane) to yield spermidine. The sequence is that of Polyamine aminopropyltransferase from Xanthomonas euvesicatoria pv. vesicatoria (strain 85-10) (Xanthomonas campestris pv. vesicatoria).